Consider the following 429-residue polypeptide: Chaperone SurA (429 aa).

The first 18 residues, 1–18, serve as a signal peptide directing secretion; it reads MFKRIALVCALFSGICFA. PpiC domains are found at residues 170–271 and 281–380; these read NLTY…KLVA and ITQT…EVIA.

The protein localises to the periplasm. It carries out the reaction [protein]-peptidylproline (omega=180) = [protein]-peptidylproline (omega=0). In terms of biological role, chaperone involved in the correct folding and assembly of outer membrane proteins. Recognizes specific patterns of aromatic residues and the orientation of their side chains, which are found more frequently in integral outer membrane proteins. May act in both early periplasmic and late outer membrane-associated steps of protein maturation. This chain is Chaperone SurA, found in Legionella pneumophila (strain Paris).